The following is a 341-amino-acid chain: Phosphate acyltransferase (341 aa).

The protein belongs to the PlsX family. Homodimer. Probably interacts with PlsY.

The protein resides in the cytoplasm. It carries out the reaction a fatty acyl-[ACP] + phosphate = an acyl phosphate + holo-[ACP]. It participates in lipid metabolism; phospholipid metabolism. Catalyzes the reversible formation of acyl-phosphate (acyl-PO(4)) from acyl-[acyl-carrier-protein] (acyl-ACP). This enzyme utilizes acyl-ACP as fatty acyl donor, but not acyl-CoA. This Nostoc sp. (strain PCC 7120 / SAG 25.82 / UTEX 2576) protein is Phosphate acyltransferase.